The chain runs to 301 residues: MEISDFSSMKLNSRPELIDFEGISMIHYFTDNWEKVKNFQARPDDILIATYPKAGTTWVSYILDLLYFGNESPERQTSQPIYMRVPFLEACFEGIPFGTELADNLPTSPRLIKTHLPVQLVPKSFWEQNSKVVYVARNAKDNAVSYFHFDRMNMGQPEPGDWNTFLQKFMEGRNVFGPWYDHVNGYWKKKQTYSNILYMFYEDMVENTGREVERLCSFLGLSTSAAERERITKGVQFDAMKQNKMTNYSTIPVMDFKISPFMRKGKVGDWRNHFTVAQNEQFDEVYKQKMKNTTVKFRTEL.

K53 to W58 contacts 3'-phosphoadenylyl sulfate. Residue H115 is the Proton acceptor of the active site. Residues R137, S145, Y201, V235–M240, and R263–G265 each bind 3'-phosphoadenylyl sulfate.

The protein belongs to the sulfotransferase 1 family.

The protein resides in the cytoplasm. Inhibited by Hg(2+), Co(2+), Zn(2+), Cd(2+), Cu(2+) and Pb(2+) ions. Activated slightly by Mn(2+), Ca(2+) and Mg(2+) ions. Sulfotransferase that utilizes 3'-phospho-5'-adenylyl sulfate (PAPS) as sulfonate donor to catalyze the sulfate conjugation of a variety of xenobiotic and endogenous compounds, including dopamine, T3 (triiodo-L-thyronine), T4 (thyroxine), estrone, DHEA (dehydroepiandrosterone), flavonoids, isoflavonoids and other phenolic compounds. The sequence is that of Cytosolic sulfotransferase 3 from Danio rerio (Zebrafish).